The chain runs to 487 residues: Protein Optix (487 aa).

A DNA-binding region (homeobox) is located at residues 154–214 (WDGEQKTHCF…KNRRQRDRAA (61 aa)). 2 disordered regions span residues 182 to 330 (NPTK…GAGP) and 443 to 463 (ASVGGGGGNQHHEPTTTGYHH). Over residues 255–277 (GTHSPVPSSLQLQHSPGSTSNGA) the composition is skewed to polar residues. Residues 278-293 (NDREESLSVDDDKPRD) show a composition bias toward basic and acidic residues. Over residues 294-312 (LSGSLPLPLSLPLPLASPT) the composition is skewed to low complexity. Gly residues predominate over residues 321-330 (GYGGGAGAGP).

It belongs to the SIX/Sine oculis homeobox family. Expressed during early development of the head. First expressed in a band around the anterior end of stage 5 blastoderm embryo, at 93% to 85% egg length. By gastrula stage, site of expression shifts to the dorsal-anterior region. At stage 12, expression is found in the clypeolabrum, the stomodaeum, and in ectoderm dorsal to the future supraesophageal ganglion.

Its subcellular location is the nucleus. In terms of biological role, may be involved in head or eye development; development of the clypeolabrum and several head sensory organs. This is Protein Optix (Optix) from Drosophila melanogaster (Fruit fly).